Here is a 273-residue protein sequence, read N- to C-terminus: Exosporium protein C (273 aa).

The protein resides in the spore wall. The polypeptide is Exosporium protein C (Clostridium sporogenes (strain ATCC 15579)).